A 345-amino-acid polypeptide reads, in one-letter code: Anthranilate phosphoribosyltransferase (345 aa).

5-phospho-alpha-D-ribose 1-diphosphate-binding positions include glycine 79, 82–83 (GD), threonine 87, 89–92 (NVST), 106–114 (KHGNRAVSG), and serine 118. Anthranilate is bound at residue glycine 79. Serine 91 lines the Mg(2+) pocket. Asparagine 109 contributes to the anthranilate binding site. Arginine 164 lines the anthranilate pocket. Mg(2+)-binding residues include aspartate 223 and glutamate 224.

The protein belongs to the anthranilate phosphoribosyltransferase family. In terms of assembly, homodimer. Mg(2+) serves as cofactor.

The enzyme catalyses N-(5-phospho-beta-D-ribosyl)anthranilate + diphosphate = 5-phospho-alpha-D-ribose 1-diphosphate + anthranilate. It participates in amino-acid biosynthesis; L-tryptophan biosynthesis; L-tryptophan from chorismate: step 2/5. Catalyzes the transfer of the phosphoribosyl group of 5-phosphorylribose-1-pyrophosphate (PRPP) to anthranilate to yield N-(5'-phosphoribosyl)-anthranilate (PRA). This is Anthranilate phosphoribosyltransferase from Saccharolobus islandicus (strain L.S.2.15 / Lassen #1) (Sulfolobus islandicus).